A 232-amino-acid chain; its full sequence is MASSRTDPETEPESVFPREIRLFTDSYSESSRFCFCGHELSITQNFGSRLGVAARVWDAALSLCDYFESQNVDFRGKKVIELGAGTGIVGILAALQGGDVTITDLPVALEQIQDNVHANVPPGGRARVCALSWGIDQHVFPGNYDLVLGADIVYLEPTFPLLLGTLRHLCGPHGTIYLASKMRAEHGAETFFRRLLPQHFHLELAQRDEDVNVNIYRARHREVAPAGQHPFC.

S-adenosyl-L-methionine is bound by residues W57, 83 to 85 (GAG), D104, W133, and A150.

This sequence belongs to the methyltransferase superfamily. METTL21 family. In terms of assembly, interacts with members of the heat shock protein 70 and 90 families and of the TCP-1 chaperonin family, as well as with HSPD1, STIP1 and tubulin; at least some of these proteins may be methylation substrates.

It localises to the cytoplasm. It is found in the cytoskeleton. The protein localises to the microtubule organizing center. The protein resides in the centrosome. It catalyses the reaction L-lysyl-[protein] + 3 S-adenosyl-L-methionine = N(6),N(6),N(6)-trimethyl-L-lysyl-[protein] + 3 S-adenosyl-L-homocysteine + 3 H(+). The enzyme catalyses L-lysyl-[protein] + S-adenosyl-L-methionine = N(6)-methyl-L-lysyl-[protein] + S-adenosyl-L-homocysteine + H(+). It carries out the reaction N(6)-methyl-L-lysyl-[protein] + S-adenosyl-L-methionine = N(6),N(6)-dimethyl-L-lysyl-[protein] + S-adenosyl-L-homocysteine + H(+). The catalysed reaction is N(6),N(6)-dimethyl-L-lysyl-[protein] + S-adenosyl-L-methionine = N(6),N(6),N(6)-trimethyl-L-lysyl-[protein] + S-adenosyl-L-homocysteine + H(+). In terms of biological role, protein-lysine methyltransferase that selectively mono-, di- and trimethylates 'Lys-165' of the translation elongation factors EEF1A1 and EEF1A2 in an aminoacyl-tRNA and GTP-dependent manner. EEF1A1 methylation by EEF1AKMT3 is dynamic as well as inducible by stress conditions, such as ER-stress, and plays a regulatory role on mRNA translation. The polypeptide is EEF1A lysine methyltransferase 3 (Mus musculus (Mouse)).